The primary structure comprises 317 residues: Acetyl-coenzyme A carboxylase carboxyl transferase subunit alpha (317 aa).

Residues 33-294 (NLDDEITRLQ…KKRLLADLAD (262 aa)) enclose the CoA carboxyltransferase C-terminal domain.

Belongs to the AccA family. In terms of assembly, acetyl-CoA carboxylase is a heterohexamer composed of biotin carboxyl carrier protein (AccB), biotin carboxylase (AccC) and two subunits each of ACCase subunit alpha (AccA) and ACCase subunit beta (AccD).

Its subcellular location is the cytoplasm. The catalysed reaction is N(6)-carboxybiotinyl-L-lysyl-[protein] + acetyl-CoA = N(6)-biotinyl-L-lysyl-[protein] + malonyl-CoA. It participates in lipid metabolism; malonyl-CoA biosynthesis; malonyl-CoA from acetyl-CoA: step 1/1. In terms of biological role, component of the acetyl coenzyme A carboxylase (ACC) complex. First, biotin carboxylase catalyzes the carboxylation of biotin on its carrier protein (BCCP) and then the CO(2) group is transferred by the carboxyltransferase to acetyl-CoA to form malonyl-CoA. The polypeptide is Acetyl-coenzyme A carboxylase carboxyl transferase subunit alpha (Histophilus somni (strain 2336) (Haemophilus somnus)).